The chain runs to 350 residues: Galactokinase (350 aa).

14-17 is a binding site for substrate; sequence EHTD. Residues S46 and 96 to 102 each bind ATP; that span reads GAGLSSS. Positions 102 and 134 each coordinate Mg(2+). The Proton acceptor role is filled by D146. Y196 lines the substrate pocket.

It belongs to the GHMP kinase family. GalK subfamily.

It localises to the cytoplasm. It carries out the reaction alpha-D-galactose + ATP = alpha-D-galactose 1-phosphate + ADP + H(+). The protein operates within carbohydrate metabolism; galactose metabolism. Its function is as follows. Catalyzes the transfer of the gamma-phosphate of ATP to D-galactose to form alpha-D-galactose-1-phosphate (Gal-1-P). This chain is Galactokinase, found in Thermotoga neapolitana.